Consider the following 134-residue polypeptide: Phosphoribosyl-ATP pyrophosphatase (134 aa).

The protein belongs to the PRA-PH family.

The protein localises to the cytoplasm. It carries out the reaction 1-(5-phospho-beta-D-ribosyl)-ATP + H2O = 1-(5-phospho-beta-D-ribosyl)-5'-AMP + diphosphate + H(+). Its pathway is amino-acid biosynthesis; L-histidine biosynthesis; L-histidine from 5-phospho-alpha-D-ribose 1-diphosphate: step 2/9. This chain is Phosphoribosyl-ATP pyrophosphatase, found in Verminephrobacter eiseniae (strain EF01-2).